The primary structure comprises 62 residues: Photosystem II reaction center protein Z (62 aa).

2 helical membrane-spanning segments follow: residues 8–28 (AVFA…VVFA) and 41–61 (FSGT…NSLI).

The protein belongs to the PsbZ family. In terms of assembly, PSII is composed of 1 copy each of membrane proteins PsbA, PsbB, PsbC, PsbD, PsbE, PsbF, PsbH, PsbI, PsbJ, PsbK, PsbL, PsbM, PsbT, PsbY, PsbZ, Psb30/Ycf12, at least 3 peripheral proteins of the oxygen-evolving complex and a large number of cofactors. It forms dimeric complexes.

It localises to the plastid. It is found in the chloroplast thylakoid membrane. May control the interaction of photosystem II (PSII) cores with the light-harvesting antenna, regulates electron flow through the 2 photosystem reaction centers. PSII is a light-driven water plastoquinone oxidoreductase, using light energy to abstract electrons from H(2)O, generating a proton gradient subsequently used for ATP formation. This is Photosystem II reaction center protein Z from Cucumis sativus (Cucumber).